A 219-amino-acid polypeptide reads, in one-letter code: Large ribosomal subunit protein uL3 (219 aa).

Disordered stretches follow at residues 62–81 (DSRSSKYANKPAEGHAKKAG) and 136–156 (QARGPMSHGSHFHRAPGSVGM).

This sequence belongs to the universal ribosomal protein uL3 family. Part of the 50S ribosomal subunit. Forms a cluster with proteins L14 and L19.

Functionally, one of the primary rRNA binding proteins, it binds directly near the 3'-end of the 23S rRNA, where it nucleates assembly of the 50S subunit. The sequence is that of Large ribosomal subunit protein uL3 from Staphylococcus saprophyticus subsp. saprophyticus (strain ATCC 15305 / DSM 20229 / NCIMB 8711 / NCTC 7292 / S-41).